We begin with the raw amino-acid sequence, 344 residues long: GTPase Obg (344 aa).

The Obg domain occupies 1 to 159 (MKFLDLAKVY…RTIWLRLKLI (159 aa)). The 167-residue stretch at 160–326 (ADVGLLGLPN…VLRVLRARVD (167 aa)) folds into the OBG-type G domain. GTP-binding positions include 166-173 (GLPNAGKS), 191-195 (FTTLV), 212-215 (DIPG), 279-282 (NKID), and 307-309 (SGV). The Mg(2+) site is built by Ser173 and Thr193.

The protein belongs to the TRAFAC class OBG-HflX-like GTPase superfamily. OBG GTPase family. As to quaternary structure, monomer. Mg(2+) serves as cofactor.

Its subcellular location is the cytoplasm. Its function is as follows. An essential GTPase which binds GTP, GDP and possibly (p)ppGpp with moderate affinity, with high nucleotide exchange rates and a fairly low GTP hydrolysis rate. Plays a role in control of the cell cycle, stress response, ribosome biogenesis and in those bacteria that undergo differentiation, in morphogenesis control. The polypeptide is GTPase Obg (Jannaschia sp. (strain CCS1)).